The chain runs to 524 residues: 2-isopropylmalate synthase (524 aa).

Positions 12–274 (VIIFDTTLRD…WNNIETTMLT (263 aa)) constitute a Pyruvate carboxyltransferase domain. Asp21, His209, His211, and Asn245 together coordinate Mn(2+). The segment at 398-524 (KLNSLTVIAG…EAVPAVAAAG (127 aa)) is regulatory domain.

It belongs to the alpha-IPM synthase/homocitrate synthase family. LeuA type 1 subfamily. As to quaternary structure, homodimer. It depends on Mn(2+) as a cofactor.

It is found in the cytoplasm. It catalyses the reaction 3-methyl-2-oxobutanoate + acetyl-CoA + H2O = (2S)-2-isopropylmalate + CoA + H(+). It functions in the pathway amino-acid biosynthesis; L-leucine biosynthesis; L-leucine from 3-methyl-2-oxobutanoate: step 1/4. In terms of biological role, catalyzes the condensation of the acetyl group of acetyl-CoA with 3-methyl-2-oxobutanoate (2-ketoisovalerate) to form 3-carboxy-3-hydroxy-4-methylpentanoate (2-isopropylmalate). The protein is 2-isopropylmalate synthase of Rhodopseudomonas palustris (strain HaA2).